A 232-amino-acid polypeptide reads, in one-letter code: tRNA1(Val) (adenine(37)-N6)-methyltransferase (232 aa).

Belongs to the methyltransferase superfamily. tRNA (adenine-N(6)-)-methyltransferase family.

Its subcellular location is the cytoplasm. The enzyme catalyses adenosine(37) in tRNA1(Val) + S-adenosyl-L-methionine = N(6)-methyladenosine(37) in tRNA1(Val) + S-adenosyl-L-homocysteine + H(+). In terms of biological role, specifically methylates the adenine in position 37 of tRNA(1)(Val) (anticodon cmo5UAC). In Haemophilus influenzae (strain ATCC 51907 / DSM 11121 / KW20 / Rd), this protein is tRNA1(Val) (adenine(37)-N6)-methyltransferase.